A 793-amino-acid chain; its full sequence is 3',5'-cyclic-nucleotide phosphodiesterase regA (793 aa).

Residues 1-153 (MNNKQEEIDQ…SSHRVSDFSD (153 aa)) are disordered. Composition is skewed to low complexity over residues 13–34 (SSTS…DSTS), 54–69 (NKNN…SNNN), and 80–121 (NNSS…NNNN). Positions 161–280 (RILVADDDDV…LLKKKIDTVL (120 aa)) constitute a Response regulatory domain. D212 is subject to 4-aspartylphosphate. The PDEase domain maps to 410-733 (RRNSIPTFPQ…ENWQAYMELQ (324 aa)). H487 serves as the catalytic Proton donor. 4 residues coordinate a divalent metal cation: H491, H527, D528, and D639. The segment at 756–793 (KLPKIDEEENRDKVSSSSSSSTAPLTSTSSSNNETSSS) is disordered. Residues 770-793 (SSSSSSSTAPLTSTSSSNNETSSS) show a composition bias toward low complexity.

Belongs to the cyclic nucleotide phosphodiesterase family. Requires a divalent metal cation as cofactor. The phosphorelay mechanism involves the sequential transfer of a phosphate group from Asp-212 of pde2 to 'His-65' of rdeA. Phosphorylation of Asp-212 activates the phosphodiesterase domain.

It localises to the cytoplasm. The protein localises to the cytosol. The enzyme catalyses 3',5'-cyclic AMP + H2O = AMP + H(+). Inhibited by 3-isobutyl-1-methylxanthine (IBMX). Functionally, phosphodiesterase specific for cAMP. Involved in the degradation of intracellular cAMP. Morphological suppressor of tagB. Phosphorelay protein that accepts phosphate from rdeA or supplies phosphate from regA; depending on the relative concentration of the phosphodonor proteins. In Dictyostelium discoideum (Social amoeba), this protein is 3',5'-cyclic-nucleotide phosphodiesterase regA (regA).